The following is a 484-amino-acid chain: Signal transduction histidine-protein kinase/phosphatase MprB (484 aa).

The span at 1 to 10 shows a compositional bias: low complexity; sequence MAADNAGRWP. The segment at 1–23 is disordered; the sequence is MAADNAGRWPGQPPGPPAPTHPA. The Cytoplasmic segment spans residues 1–31; it reads MAADNAGRWPGQPPGPPAPTHPASSVSLRWR. Residues 11-20 show a composition bias toward pro residues; sequence GQPPGPPAPT. A helical membrane pass occupies residues 32–52; sequence VMLLAMSMVVISVVLMAVAVF. At 53 to 172 the chain is on the extracellular side; that stretch reads AVTSRALYDD…TGKVLKRLGT (120 aa). A helical transmembrane segment spans residues 173 to 193; that stretch reads VLLIVGGLGVAVAAIAGGMVA. The region spanning 194-246 is the HAMP domain; that stretch reads SAGLRPVGRLTQAAERVARTDDLRPIPVIGNDELARLTETFNMMLRALAESRE. The Cytoplasmic segment spans residues 194–484; sequence SAGLRPVGRL…SPAGSDEAER (291 aa). Residues 254–474 form the Histidine kinase domain; the sequence is DAGHELRTPL…AMHVVLPGRP (221 aa). Phosphohistidine; by autocatalysis is present on histidine 257.

Mg(2+) is required as a cofactor. Mn(2+) serves as cofactor. Autophosphorylated.

The protein resides in the cell membrane. The catalysed reaction is ATP + protein L-histidine = ADP + protein N-phospho-L-histidine.. Its function is as follows. Member of the two-component regulatory system MprB/MprA which contributes to maintaining a balance among several systems involved in stress resistance and is required for establishment and maintenance of persistent infection in the host. In response to environmental signals MprB acts both as a membrane-associated protein kinase that undergoes autophosphorylation and subsequently transfers the phosphate to MprA, and a protein phosphatase that dephosphorylates phospho-MprA. The protein is Signal transduction histidine-protein kinase/phosphatase MprB (mprB) of Mycolicibacterium vanbaalenii (strain DSM 7251 / JCM 13017 / BCRC 16820 / KCTC 9966 / NRRL B-24157 / PYR-1) (Mycobacterium vanbaalenii).